A 109-amino-acid polypeptide reads, in one-letter code: Large ribosomal subunit protein uL24 (109 aa).

The protein belongs to the universal ribosomal protein uL24 family. Part of the 50S ribosomal subunit.

In terms of biological role, one of two assembly initiator proteins, it binds directly to the 5'-end of the 23S rRNA, where it nucleates assembly of the 50S subunit. Its function is as follows. One of the proteins that surrounds the polypeptide exit tunnel on the outside of the subunit. The sequence is that of Large ribosomal subunit protein uL24 from Syntrophotalea carbinolica (strain DSM 2380 / NBRC 103641 / GraBd1) (Pelobacter carbinolicus).